The following is a 176-amino-acid chain: Inner membrane-spanning protein YciB (176 aa).

A run of 6 helical transmembrane segments spans residues 3 to 23 (FLFD…WGIF), 24 to 44 (TATA…AFRH), 49 to 69 (TMLW…LVLH), 72 to 92 (KFIQ…LLAA), 121 to 141 (LAWA…VHNF), and 149 to 169 (FKLF…SLWL).

This sequence belongs to the YciB family.

It localises to the cell inner membrane. In terms of biological role, plays a role in cell envelope biogenesis, maintenance of cell envelope integrity and membrane homeostasis. The sequence is that of Inner membrane-spanning protein YciB from Burkholderia cenocepacia (strain ATCC BAA-245 / DSM 16553 / LMG 16656 / NCTC 13227 / J2315 / CF5610) (Burkholderia cepacia (strain J2315)).